Here is a 343-residue protein sequence, read N- to C-terminus: L-threonine 3-dehydrogenase (343 aa).

Zn(2+) is bound at residue C40. Active-site charge relay system residues include T42 and H45. Residues H65, E66, C95, C98, C101, and C109 each coordinate Zn(2+). NAD(+)-binding positions include I177, D197, R202, 264–266 (LGI), and 288–289 (IY).

It belongs to the zinc-containing alcohol dehydrogenase family. In terms of assembly, homotetramer. Zn(2+) serves as cofactor.

The protein localises to the cytoplasm. The enzyme catalyses L-threonine + NAD(+) = (2S)-2-amino-3-oxobutanoate + NADH + H(+). It functions in the pathway amino-acid degradation; L-threonine degradation via oxydo-reductase pathway; glycine from L-threonine: step 1/2. Functionally, catalyzes the NAD(+)-dependent oxidation of L-threonine to 2-amino-3-ketobutyrate. The sequence is that of L-threonine 3-dehydrogenase from Vibrio atlanticus (strain LGP32) (Vibrio splendidus (strain Mel32)).